Consider the following 207-residue polypeptide: MRPAKPPQSKERKRSKSLTSADHDNSPQRAETAASALRQRIRVVPDFPSRGIVFEDLTPVLADPHSFKLLVQDLANHCRNFDIDLIGGLDARGFLLGSAVAYELGVGILAVRKGGKLPPPVHHVDYSLEYGTASLEIPADNAIPLQGKNVFLIDDVLATGGTLSASRELLENAGANVCGLGVVLEVSALDGRDRLKDLPLYVVDQAG.

Residues 1–33 (MRPAKPPQSKERKRSKSLTSADHDNSPQRAETA) form a disordered region.

The protein belongs to the purine/pyrimidine phosphoribosyltransferase family. Homodimer.

The protein localises to the cytoplasm. The catalysed reaction is AMP + diphosphate = 5-phospho-alpha-D-ribose 1-diphosphate + adenine. It participates in purine metabolism; AMP biosynthesis via salvage pathway; AMP from adenine: step 1/1. In terms of biological role, catalyzes a salvage reaction resulting in the formation of AMP, that is energically less costly than de novo synthesis. The chain is Adenine phosphoribosyltransferase from Corynebacterium jeikeium (strain K411).